The chain runs to 232 residues: Chalcone--flavanone isomerase (232 aa).

Positions 50 and 192 each coordinate substrate.

The protein belongs to the chalcone isomerase family.

It carries out the reaction a chalcone = a flavanone.. Its pathway is secondary metabolite biosynthesis; flavonoid biosynthesis. Catalyzes the intramolecular cyclization of bicyclic chalcones into tricyclic (S)-flavanones. Responsible for the isomerization of 4,2',4',6'-tetrahydroxychalcone (also termed chalcone) into naringenin. This Saussurea medusa (Saw-wort) protein is Chalcone--flavanone isomerase (CHI).